Here is a 422-residue protein sequence, read N- to C-terminus: Imidazolonepropionase (422 aa).

H82 and H84 together coordinate Fe(3+). H82 and H84 together coordinate Zn(2+). 3 residues coordinate 4-imidazolone-5-propanoate: R91, Y154, and H187. Y154 provides a ligand contact to N-formimidoyl-L-glutamate. H252 lines the Fe(3+) pocket. H252 provides a ligand contact to Zn(2+). E255 is a binding site for 4-imidazolone-5-propanoate. D327 contributes to the Fe(3+) binding site. D327 serves as a coordination point for Zn(2+). Residues N329 and G331 each coordinate N-formimidoyl-L-glutamate. Position 332 (S332) interacts with 4-imidazolone-5-propanoate.

The protein belongs to the metallo-dependent hydrolases superfamily. HutI family. The cofactor is Zn(2+). It depends on Fe(3+) as a cofactor.

The protein resides in the cytoplasm. The enzyme catalyses 4-imidazolone-5-propanoate + H2O = N-formimidoyl-L-glutamate. The protein operates within amino-acid degradation; L-histidine degradation into L-glutamate; N-formimidoyl-L-glutamate from L-histidine: step 3/3. Catalyzes the hydrolytic cleavage of the carbon-nitrogen bond in imidazolone-5-propanoate to yield N-formimidoyl-L-glutamate. It is the third step in the universal histidine degradation pathway. The chain is Imidazolonepropionase from Alkaliphilus metalliredigens (strain QYMF).